Here is a 305-residue protein sequence, read N- to C-terminus: UDP-3-O-acyl-N-acetylglucosamine deacetylase (305 aa).

Positions 79, 238, and 242 each coordinate Zn(2+). The Proton donor role is filled by His265.

This sequence belongs to the LpxC family. It depends on Zn(2+) as a cofactor.

It catalyses the reaction a UDP-3-O-[(3R)-3-hydroxyacyl]-N-acetyl-alpha-D-glucosamine + H2O = a UDP-3-O-[(3R)-3-hydroxyacyl]-alpha-D-glucosamine + acetate. It functions in the pathway glycolipid biosynthesis; lipid IV(A) biosynthesis; lipid IV(A) from (3R)-3-hydroxytetradecanoyl-[acyl-carrier-protein] and UDP-N-acetyl-alpha-D-glucosamine: step 2/6. Functionally, catalyzes the hydrolysis of UDP-3-O-myristoyl-N-acetylglucosamine to form UDP-3-O-myristoylglucosamine and acetate, the committed step in lipid A biosynthesis. The protein is UDP-3-O-acyl-N-acetylglucosamine deacetylase of Haemophilus influenzae (strain PittGG).